We begin with the raw amino-acid sequence, 459 residues long: Glutamate--tRNA ligase 2 (459 aa).

The short motif at 8–18 (PSPTGYLHIGG) is the 'HIGH' region element. Residues 237–241 (KLSKR) carry the 'KMSKS' region motif. Position 240 (lysine 240) interacts with ATP.

The protein belongs to the class-I aminoacyl-tRNA synthetase family. Glutamate--tRNA ligase type 1 subfamily. In terms of assembly, monomer.

It localises to the cytoplasm. It catalyses the reaction tRNA(Glu) + L-glutamate + ATP = L-glutamyl-tRNA(Glu) + AMP + diphosphate. Functionally, catalyzes the attachment of glutamate to tRNA(Glu) in a two-step reaction: glutamate is first activated by ATP to form Glu-AMP and then transferred to the acceptor end of tRNA(Glu). This is Glutamate--tRNA ligase 2 from Campylobacter curvus (strain 525.92).